The primary structure comprises 430 residues: Terminal nucleotidyltransferase 5B (430 aa).

Residues 1–46 are disordered; it reads MMPSESETESRDRAAAQVGTAAAAAVAKAAPAGGGPDPEASSASLG. Over residues 15–44 the composition is skewed to low complexity; sequence AAQVGTAAAAAVAKAAPAGGGPDPEASSAS.

This sequence belongs to the TENT family.

The protein resides in the cytoplasm. Its subcellular location is the nucleus. The catalysed reaction is RNA(n) + ATP = RNA(n)-3'-adenine ribonucleotide + diphosphate. In terms of biological role, catalyzes the transfer of one adenosine molecule from an ATP to an mRNA poly(A) tail bearing a 3'-OH terminal group in an ATP hydrolysis-dependent manner. May be involved in maintaining the translation efficiency of at least some genes through preventing degradation of their mRNAs. Prefers RNA molecules that are adenosine-rich close to 3'-end. In addition, may inhibit cell proliferation and cell cycle progression through ubiquitination of beta-catenin/CTNNB1. The chain is Terminal nucleotidyltransferase 5B from Bos taurus (Bovine).